Here is a 377-residue protein sequence, read N- to C-terminus: uncharacterized protein (377 aa).

Residues 1-23 (MLKFRNFFKLTLLTLASAFFLSG) form the signal peptide. Cys-24 carries the N-palmitoyl cysteine lipid modification. The S-diacylglycerol cysteine moiety is linked to residue Cys-24.

The protein localises to the cell membrane. This is an uncharacterized protein from Mycoplasma genitalium (strain ATCC 33530 / DSM 19775 / NCTC 10195 / G37) (Mycoplasmoides genitalium).